We begin with the raw amino-acid sequence, 235 residues long: Ribonuclease 3 (235 aa).

Residues 6–135 (LISLEKILGF…VIGAVYFDCG (130 aa)) form the RNase III domain. Glu-48 contributes to the Mg(2+) binding site. Residue Asp-52 is part of the active site. 2 residues coordinate Mg(2+): Asn-121 and Glu-124. Residue Glu-124 is part of the active site. The DRBM domain maps to 162-231 (DEKTTLQELL…AKKALELLKN (70 aa)).

This sequence belongs to the ribonuclease III family. As to quaternary structure, homodimer. Mg(2+) serves as cofactor.

It is found in the cytoplasm. It carries out the reaction Endonucleolytic cleavage to 5'-phosphomonoester.. Digests double-stranded RNA. Involved in the processing of primary rRNA transcript to yield the immediate precursors to the large and small rRNAs (23S and 16S). Processes some mRNAs, and tRNAs when they are encoded in the rRNA operon. Processes pre-crRNA and tracrRNA of type II CRISPR loci if present in the organism. This Carboxydothermus hydrogenoformans (strain ATCC BAA-161 / DSM 6008 / Z-2901) protein is Ribonuclease 3.